An 80-amino-acid chain; its full sequence is Small ribosomal subunit protein bS18 (80 aa).

The protein belongs to the bacterial ribosomal protein bS18 family. As to quaternary structure, part of the 30S ribosomal subunit. Forms a tight heterodimer with protein bS6.

Its function is as follows. Binds as a heterodimer with protein bS6 to the central domain of the 16S rRNA, where it helps stabilize the platform of the 30S subunit. The sequence is that of Small ribosomal subunit protein bS18 from Staphylococcus saprophyticus subsp. saprophyticus (strain ATCC 15305 / DSM 20229 / NCIMB 8711 / NCTC 7292 / S-41).